A 299-amino-acid chain; its full sequence is 4-hydroxy-tetrahydrodipicolinate synthase (299 aa).

Thr50 contributes to the pyruvate binding site. Tyr139 acts as the Proton donor/acceptor in catalysis. Residue Lys167 is the Schiff-base intermediate with substrate of the active site. Val209 is a pyruvate binding site.

It belongs to the DapA family. Homotetramer; dimer of dimers.

It localises to the cytoplasm. It catalyses the reaction L-aspartate 4-semialdehyde + pyruvate = (2S,4S)-4-hydroxy-2,3,4,5-tetrahydrodipicolinate + H2O + H(+). It functions in the pathway amino-acid biosynthesis; L-lysine biosynthesis via DAP pathway; (S)-tetrahydrodipicolinate from L-aspartate: step 3/4. Catalyzes the condensation of (S)-aspartate-beta-semialdehyde [(S)-ASA] and pyruvate to 4-hydroxy-tetrahydrodipicolinate (HTPA). This Synechococcus elongatus (strain ATCC 33912 / PCC 7942 / FACHB-805) (Anacystis nidulans R2) protein is 4-hydroxy-tetrahydrodipicolinate synthase.